Reading from the N-terminus, the 288-residue chain is 3-methyl-2-oxobutanoate hydroxymethyltransferase (288 aa).

The Mg(2+) site is built by Asp-48 and Asp-87. 3-methyl-2-oxobutanoate contacts are provided by residues 48–49 (DS), Asp-87, and Lys-116. Glu-118 lines the Mg(2+) pocket. Glu-185 serves as the catalytic Proton acceptor.

Belongs to the PanB family. Homodecamer; pentamer of dimers. Mg(2+) serves as cofactor.

It localises to the cytoplasm. The catalysed reaction is 3-methyl-2-oxobutanoate + (6R)-5,10-methylene-5,6,7,8-tetrahydrofolate + H2O = 2-dehydropantoate + (6S)-5,6,7,8-tetrahydrofolate. Its pathway is cofactor biosynthesis; coenzyme A biosynthesis. Its function is as follows. Catalyzes the reversible reaction in which hydroxymethyl group from 5,10-methylenetetrahydrofolate is transferred onto alpha-ketoisovalerate to form ketopantoate. The polypeptide is 3-methyl-2-oxobutanoate hydroxymethyltransferase (Hyperthermus butylicus (strain DSM 5456 / JCM 9403 / PLM1-5)).